Reading from the N-terminus, the 352-residue chain is 4-hydroxy-2-oxovalerate aldolase (352 aa).

Positions 14–266 constitute a Pyruvate carboxyltransferase domain; the sequence is VRMTDTSLRD…KTGIDFFDIA (253 aa). 22–23 is a substrate binding site; the sequence is RD. Aspartate 23 provides a ligand contact to Mn(2+). The Proton acceptor role is filled by histidine 26. Residues serine 176 and histidine 205 each coordinate substrate. Positions 205 and 207 each coordinate Mn(2+). Residue tyrosine 296 participates in substrate binding.

The protein belongs to the 4-hydroxy-2-oxovalerate aldolase family.

The enzyme catalyses (S)-4-hydroxy-2-oxopentanoate = acetaldehyde + pyruvate. The polypeptide is 4-hydroxy-2-oxovalerate aldolase (Mycolicibacterium gilvum (strain PYR-GCK) (Mycobacterium gilvum (strain PYR-GCK))).